Reading from the N-terminus, the 72-residue chain is Large ribosomal subunit protein bL31 (72 aa).

Residues Cys17, Cys19, Cys37, and Cys40 each coordinate Zn(2+).

The protein belongs to the bacterial ribosomal protein bL31 family. Type A subfamily. In terms of assembly, part of the 50S ribosomal subunit. Requires Zn(2+) as cofactor.

In terms of biological role, binds the 23S rRNA. This chain is Large ribosomal subunit protein bL31, found in Clostridium botulinum (strain Loch Maree / Type A3).